Here is a 66-residue protein sequence, read N- to C-terminus: Large ribosomal subunit protein uL29 (66 aa).

It belongs to the universal ribosomal protein uL29 family.

This chain is Large ribosomal subunit protein uL29, found in Bartonella quintana (strain Toulouse) (Rochalimaea quintana).